The following is a 1009-amino-acid chain: Chitin synthase 2 (1009 aa).

Polar residues-rich tracts occupy residues 1 to 12 (MSYNNPNNSNSH) and 34 to 62 (EFLNQRSNTPLTQGTYNYHNTSTNSLNFQ). 2 disordered regions span residues 1 to 62 (MSYN…LNFQ) and 175 to 234 (DESQ…EVRS). A compositionally biased stretch (acidic residues) spans 192-202 (EGEEEEEEGET). The next 7 membrane-spanning stretches (helical) occupy residues 647-667 (WLNGSFFAAIYSLVHFYKVWT), 682-702 (FFYQLINLIVSWFSIGSYFLV), 722-742 (ILSVIFLWLYLASIVTTFVLS), 757-777 (IVIFFAILMAYMIFAAIFMAV), 804-823 (LVVATSSTYALYFLASFLYF), 930-950 (VLVWMFTNFVVIALVLETGGF), and 967-987 (AAVFLTVILWTVAFMALFRFI).

This sequence belongs to the chitin synthase family.

It localises to the cell membrane. It carries out the reaction [(1-&gt;4)-N-acetyl-beta-D-glucosaminyl](n) + UDP-N-acetyl-alpha-D-glucosamine = [(1-&gt;4)-N-acetyl-beta-D-glucosaminyl](n+1) + UDP + H(+). Its function is as follows. Polymerizes chitin, a structural polymer of the cell wall and septum, by transferring the sugar moiety of UDP-GlcNAc to the non-reducing end of the growing chitin polymer. The sequence is that of Chitin synthase 2 (CHS2) from Candida albicans (Yeast).